We begin with the raw amino-acid sequence, 91 residues long: uncharacterized protein (91 aa).

The signal sequence occupies residues 1–21 (MKIISKMLVGALALAVTNVYA).

The protein belongs to the BhsA/McbA family.

Its subcellular location is the periplasm. This is an uncharacterized protein from Escherichia coli (strain K12).